Reading from the N-terminus, the 365-residue chain is UDP-N-acetylglucosamine--N-acetylmuramyl-(pentapeptide) pyrophosphoryl-undecaprenol N-acetylglucosamine transferase (365 aa).

Residues 10-12 (TGG), Asn128, Arg170, Ser199, Ile250, and Gln295 each bind UDP-N-acetyl-alpha-D-glucosamine.

Belongs to the glycosyltransferase 28 family. MurG subfamily.

The protein resides in the cell inner membrane. It catalyses the reaction di-trans,octa-cis-undecaprenyl diphospho-N-acetyl-alpha-D-muramoyl-L-alanyl-D-glutamyl-meso-2,6-diaminopimeloyl-D-alanyl-D-alanine + UDP-N-acetyl-alpha-D-glucosamine = di-trans,octa-cis-undecaprenyl diphospho-[N-acetyl-alpha-D-glucosaminyl-(1-&gt;4)]-N-acetyl-alpha-D-muramoyl-L-alanyl-D-glutamyl-meso-2,6-diaminopimeloyl-D-alanyl-D-alanine + UDP + H(+). It participates in cell wall biogenesis; peptidoglycan biosynthesis. In terms of biological role, cell wall formation. Catalyzes the transfer of a GlcNAc subunit on undecaprenyl-pyrophosphoryl-MurNAc-pentapeptide (lipid intermediate I) to form undecaprenyl-pyrophosphoryl-MurNAc-(pentapeptide)GlcNAc (lipid intermediate II). This is UDP-N-acetylglucosamine--N-acetylmuramyl-(pentapeptide) pyrophosphoryl-undecaprenol N-acetylglucosamine transferase from Pelodictyon phaeoclathratiforme (strain DSM 5477 / BU-1).